Reading from the N-terminus, the 187-residue chain is UPF0301 protein SG2023 (187 aa).

This sequence belongs to the UPF0301 (AlgH) family.

This is UPF0301 protein SG2023 from Sodalis glossinidius (strain morsitans).